The chain runs to 204 residues: UPF0637 protein SAB0972c (204 aa).

Belongs to the UPF0637 family.

This Staphylococcus aureus (strain bovine RF122 / ET3-1) protein is UPF0637 protein SAB0972c.